A 1479-amino-acid polypeptide reads, in one-letter code: DNA-directed RNA polymerase subunit beta'' (1479 aa).

Cysteine 220, cysteine 296, cysteine 303, and cysteine 306 together coordinate Zn(2+). Disordered stretches follow at residues 618 to 640 (TRAE…REDE) and 663 to 756 (LEDE…KKEG). Composition is skewed to acidic residues over residues 622 to 631 (DSEEEYETLE), 704 to 717 (DEYG…EDEY), and 731 to 749 (LEED…PEED).

Belongs to the RNA polymerase beta' chain family. RpoC2 subfamily. As to quaternary structure, in plastids the minimal PEP RNA polymerase catalytic core is composed of four subunits: alpha, beta, beta', and beta''. When a (nuclear-encoded) sigma factor is associated with the core the holoenzyme is formed, which can initiate transcription. It depends on Zn(2+) as a cofactor.

The protein resides in the plastid. It localises to the chloroplast. It carries out the reaction RNA(n) + a ribonucleoside 5'-triphosphate = RNA(n+1) + diphosphate. Its function is as follows. DNA-dependent RNA polymerase catalyzes the transcription of DNA into RNA using the four ribonucleoside triphosphates as substrates. This chain is DNA-directed RNA polymerase subunit beta'', found in Triticum aestivum (Wheat).